An 858-amino-acid polypeptide reads, in one-letter code: Volume-regulated anion channel subunit LRRC8D (858 aa).

At 1 to 22 (MFTLAEVASLNDIQPTYRILKP) the chain is on the cytoplasmic side. The chain crosses the membrane as a helical span at residues 23–48 (WWDVFMDYLAVVMLMVAIFAGTMQLT). Residues 49–163 (KDQVVCLPVL…YHLALPWYSK (115 aa)) are Extracellular-facing. Cysteines 54 and 354 form a disulfide. The interval 118-137 (AESTFPSQETKKEKRDPTGR) is disordered. Residues 126-137 (ETKKEKRDPTGR) show a composition bias toward basic and acidic residues. A helical transmembrane segment spans residues 164–182 (YFPYLALIHTIILMVSSNF). Residues 183 to 308 (WFKYPKTCSK…EDSDLIYKLY (126 aa)) are Cytoplasmic-facing. The interval 221–251 (SEENKQRITGAQTLPKHVSTSSDEGSPSAST) is disordered. Polar residues predominate over residues 227 to 251 (RITGAQTLPKHVSTSSDEGSPSAST). A phosphoserine mark is found at serine 241, serine 242, and serine 246. A helical transmembrane segment spans residues 309–330 (VVQTLIKTAKFIFILCYTANFV). The Extracellular segment spans residues 331 to 360 (NAISFEHVCKPKVEHLTGYEVFECTHNMAY). A helical membrane pass occupies residues 361–386 (MLKKLLISYISIICVYGFICLYTLFW). Residues 387–858 (LFRIPLKEYS…DVNVPFANGI (472 aa)) are Cytoplasmic-facing. 13 LRR repeats span residues 514–534 (NLQE…AFSF), 538–559 (HLRC…VYLL), 561–582 (NLRE…IGLE), 589–609 (HLKI…ITDV), 612–632 (HLTK…NSLK), 636–657 (NVAE…IFSL), 659–680 (NLQE…ISFQ), 684–705 (RLTC…ITHV), 707–728 (NLES…VFSL), 730–751 (KLRC…IGLL), 753–774 (NLQH…LFKC), 776–797 (KLRT…ISQL), and 799–820 (QLTQ…LGQC).

The protein belongs to the LRRC8 family. Heterohexamer; oligomerizes with other LRRC8 proteins (LRRC8A, LRRC8B, LRRC8C and/or LRRC8E) to form a heterohexamer. In vivo, the subunit composition may depend primarily on expression levels, and heterooligomeric channels containing various proportions of the different LRRC8 proteins may coexist.

It is found in the cell membrane. It localises to the endoplasmic reticulum membrane. It catalyses the reaction chloride(in) = chloride(out). It carries out the reaction iodide(out) = iodide(in). The enzyme catalyses taurine(out) = taurine(in). Functionally, non-essential component of the volume-regulated anion channel (VRAC, also named VSOAC channel), an anion channel required to maintain a constant cell volume in response to extracellular or intracellular osmotic changes. The VRAC channel conducts iodide better than chloride and can also conduct organic osmolytes like taurine. Plays a redundant role in the efflux of amino acids, such as aspartate, in response to osmotic stress. Channel activity requires LRRC8A plus at least one other family member (LRRC8B, LRRC8C, LRRC8D or LRRC8E); channel characteristics depend on the precise subunit composition. Also acts as a regulator of glucose-sensing in pancreatic beta cells: VRAC currents, generated in response to hypotonicity- or glucose-induced beta cell swelling, depolarize cells, thereby causing electrical excitation, leading to increase glucose sensitivity and insulin secretion. VRAC channels containing LRRC8D inhibit transport of immunoreactive cyclic dinucleotide GMP-AMP (2'-3'-cGAMP), an immune messenger produced in response to DNA virus in the cytosol. This is Volume-regulated anion channel subunit LRRC8D from Rattus norvegicus (Rat).